We begin with the raw amino-acid sequence, 1131 residues long: Plasma membrane ATPase (1131 aa).

The next 6 helical transmembrane spans lie at 77-97 (PVLVFLGYMWNPLAWAMEAAA), 98-118 (IISIALLDVADFVLIVGLLLI), 151-171 (GAIVTIDAVNLVPGDVILIRL), 231-251 (AVVYATGVNTFFGRAAALISG), 265-285 (MSAICIVTILLWVVVELAVQF), and 305-325 (MLVVLVGGIPIAMPTVLSVTL). Asp-357 serves as the catalytic 4-aspartylphosphate intermediate. Mg(2+) contacts are provided by Asp-615 and Asp-619. The next 5 helical transmembrane spans lie at 642–662 (AADIVLTEPGLSTIVTAVIGA), 689–709 (LITVIYDWYFPTILIVIMAVF), 733–753 (ITNIFIMGMVYGLYLTLSTWA), 884–904 (LAFFFAQVGATLFGIFGLGGF), and 946–966 (VIGCGGYVIVAWIWSAIWYVL). The span at 994 to 1010 (KRSLDRRSKDDIGDKEF) shows a compositional bias: basic and acidic residues. 2 disordered regions span residues 994 to 1023 (KRSLDRRSKDDIGDKEFTGPSGMVPANYSN) and 1067 to 1131 (RRSM…TIRE). Polar residues predominate over residues 1089-1100 (SRTSNTLSTGSK). Basic and acidic residues predominate over residues 1118–1131 (IKPDKYDFASTIRE).

This sequence belongs to the cation transport ATPase (P-type) (TC 3.A.3) family. Type IIIA subfamily.

Its subcellular location is the cell membrane. It carries out the reaction ATP + H2O + H(+)(in) = ADP + phosphate + 2 H(+)(out). Functionally, the plasma membrane ATPase of plants and fungi is a hydrogen ion pump. The proton gradient it generates drives the active transport of nutrients by H(+)-symport. The resulting external acidification and/or internal alkinization may mediate growth responses. The chain is Plasma membrane ATPase (PMA1) from Dunaliella bioculata (Green alga).